The following is a 319-amino-acid chain: MHTKILGTGSYVPVQVRSNQDLEKMVETSDQWIVERTGISERRIAAQDETVSTMGYLAALNALEMAGIEASDLDMIICGTTSAANAFPAAACEIQAMLGVHTIPAFDIAAACSGFVYALSVADQFVKNGTAKKVLVIGADVLSRLCEPEDRTTIILFGDGAGAAIIGASDEPGIISTHIYADGRQGDLLKCAFPPRQGETSEAVGFMTMKGNDVFKVAVTQLSHVVTETLRLNNIDKSEIDWLVPHQANFRIINATAKKLDMSLDKVVLTLAKHGNTSAASVPIALDEAVRDGRIQRGQLLLLEAFGAGFAWGSALVRF.

Catalysis depends on residues Cys112 and His246. The ACP-binding stretch occupies residues 247–251; that stretch reads QANFR. Asn276 is a catalytic residue.

The protein belongs to the thiolase-like superfamily. FabH family. As to quaternary structure, homodimer.

Its subcellular location is the cytoplasm. The enzyme catalyses malonyl-[ACP] + acetyl-CoA + H(+) = 3-oxobutanoyl-[ACP] + CO2 + CoA. Its pathway is lipid metabolism; fatty acid biosynthesis. Functionally, catalyzes the condensation reaction of fatty acid synthesis by the addition to an acyl acceptor of two carbons from malonyl-ACP. Catalyzes the first condensation reaction which initiates fatty acid synthesis and may therefore play a role in governing the total rate of fatty acid production. Possesses both acetoacetyl-ACP synthase and acetyl transacylase activities. Its substrate specificity determines the biosynthesis of branched-chain and/or straight-chain of fatty acids. The polypeptide is Beta-ketoacyl-[acyl-carrier-protein] synthase III (Shewanella oneidensis (strain ATCC 700550 / JCM 31522 / CIP 106686 / LMG 19005 / NCIMB 14063 / MR-1)).